The chain runs to 704 residues: Elongation factor G (704 aa).

Residues 10–290 (NKVRNIGIMA…AVIDYLPSPL (281 aa)) form the tr-type G domain. Residues 19–26 (AHIDAGKT), 83–87 (DTPGH), and 137–140 (NKMD) each bind GTP.

The protein belongs to the TRAFAC class translation factor GTPase superfamily. Classic translation factor GTPase family. EF-G/EF-2 subfamily.

It localises to the cytoplasm. Its function is as follows. Catalyzes the GTP-dependent ribosomal translocation step during translation elongation. During this step, the ribosome changes from the pre-translocational (PRE) to the post-translocational (POST) state as the newly formed A-site-bound peptidyl-tRNA and P-site-bound deacylated tRNA move to the P and E sites, respectively. Catalyzes the coordinated movement of the two tRNA molecules, the mRNA and conformational changes in the ribosome. This Clavibacter michiganensis subsp. michiganensis (strain NCPPB 382) protein is Elongation factor G.